A 192-amino-acid polypeptide reads, in one-letter code: Peptidyl-tRNA hydrolase (192 aa).

Tyr-17 is a tRNA binding site. His-22 (proton acceptor) is an active-site residue. Residues Phe-67, Asn-69, and Asn-115 each coordinate tRNA.

This sequence belongs to the PTH family. Monomer.

The protein localises to the cytoplasm. The enzyme catalyses an N-acyl-L-alpha-aminoacyl-tRNA + H2O = an N-acyl-L-amino acid + a tRNA + H(+). Its function is as follows. Hydrolyzes ribosome-free peptidyl-tRNAs (with 1 or more amino acids incorporated), which drop off the ribosome during protein synthesis, or as a result of ribosome stalling. Functionally, catalyzes the release of premature peptidyl moieties from peptidyl-tRNA molecules trapped in stalled 50S ribosomal subunits, and thus maintains levels of free tRNAs and 50S ribosomes. The sequence is that of Peptidyl-tRNA hydrolase from Methylobacillus flagellatus (strain ATCC 51484 / DSM 6875 / VKM B-1610 / KT).